The chain runs to 243 residues: Coproheme decarboxylase (243 aa).

Residue tyrosine 145 is part of the active site. Residue histidine 168 coordinates Fe-coproporphyrin III.

It belongs to the ChdC family. Type 2 subfamily. It depends on Fe-coproporphyrin III as a cofactor.

The enzyme catalyses Fe-coproporphyrin III + 2 H2O2 + 2 H(+) = heme b + 2 CO2 + 4 H2O. It carries out the reaction Fe-coproporphyrin III + H2O2 + H(+) = harderoheme III + CO2 + 2 H2O. The catalysed reaction is harderoheme III + H2O2 + H(+) = heme b + CO2 + 2 H2O. Its pathway is porphyrin-containing compound metabolism; protoheme biosynthesis. Functionally, involved in coproporphyrin-dependent heme b biosynthesis. Catalyzes the decarboxylation of Fe-coproporphyrin III (coproheme) to heme b (protoheme IX), the last step of the pathway. The reaction occurs in a stepwise manner with a three-propionate intermediate. This Streptomyces coelicolor (strain ATCC BAA-471 / A3(2) / M145) protein is Coproheme decarboxylase.